We begin with the raw amino-acid sequence, 308 residues long: Alternaria stem canker resistance protein 1 (308 aa).

A run of 6 helical transmembrane segments spans residues 21–41 (YQDL…RFIL), 82–102 (FVYF…EPWF), 128–148 (LLYM…LYWE), 165–185 (VSLI…VVLA), 213–233 (FSLF…FWII), and 254–274 (IILY…HLFW). The TLC domain occupies 73-287 (NKFKESAWKF…ILRMVKNQIL (215 aa)).

The protein resides in the endoplasmic reticulum membrane. In terms of biological role, mediates resistance to sphinganine-analog mycotoxins (SAMs) by restoring the sphingolipid biosynthesis. Could salvage the transport of GPI-anchored proteins from the endoplasmic reticulum to the Golgi apparatus in ceramides-depleted cells after SAM exposure. In Solanum lycopersicum (Tomato), this protein is Alternaria stem canker resistance protein 1.